Here is an 800-residue protein sequence, read N- to C-terminus: Putative antiporter subunit mnhA2 (800 aa).

Helical transmembrane passes span 1–21 (MSLV…LFTL), 29–49 (VAGY…IMKI), 78–98 (GLSL…FFYA), 109–129 (LPRF…IVIA), 133–153 (ILMY…ISYW), 167–187 (FMIT…LYII), 209–229 (FIPM…QFPF), 241–261 (TPVS…FLLF), 272–292 (VYIY…SLTA), 300–320 (GILA…VGLG), 336–356 (ILVL…KCAL), 387–407 (IVML…GFLS), 424–444 (YGFV…ILTF), 472–492 (PWLF…IFFV), 528–548 (VNLP…LALV), 595–615 (IMIT…TVGF), 627–647 (GPLE…LIFI), 651–671 (LTMV…FIAM), 676–696 (LALT…VSFS), 712–732 (TFKI…IFVA), and 768–788 (LDTM…YTLL).

This sequence belongs to the CPA3 antiporters (TC 2.A.63) subunit A family. May form a heterooligomeric complex that consists of seven subunits: mnhA2, mnhB2, mnhC2, mnhD2, mnhE2, mnhF2 and mnhG2.

It localises to the cell membrane. This is Putative antiporter subunit mnhA2 (mnhA2) from Staphylococcus epidermidis (strain ATCC 12228 / FDA PCI 1200).